The following is an 87-amino-acid chain: U3-theraphotoxin-Hhn1d (87 aa).

A signal peptide spans Met-1 to Ala-24. The propeptide occupies Ser-25–Arg-52. Intrachain disulfides connect Cys-54–Cys-67, Cys-61–Cys-72, and Cys-66–Cys-79.

It belongs to the neurotoxin 10 (Hwtx-1) family. 51 (Hntx-8) subfamily. Hntx-8 sub-subfamily. In terms of tissue distribution, expressed by the venom gland.

Its subcellular location is the secreted. Ion channel inhibitor. The protein is U3-theraphotoxin-Hhn1d of Cyriopagopus hainanus (Chinese bird spider).